The sequence spans 217 residues: MHDQIIPCGMLVAIEGIDGAGKTTLARSLALKLRGVGLETVVSKEPTNGPWGTLLRQSAVTGRFSPEEEVDVLLRDRRQHVEDLIVPMIGRGAVVILDRYFPSMVAYQGAAGLPVDALLEANAFAPRPDVLLLLDVPPVIGLQRIWERGSTPNHFETTENLSRCRDIFLALELPSKRVIDATANAETVFSAALGLVMEVLRVRLGALGAVVLERLAG.

An ATP-binding site is contributed by 16–23 (GIDGAGKT).

Belongs to the thymidylate kinase family.

It catalyses the reaction dTMP + ATP = dTDP + ADP. Phosphorylation of dTMP to form dTDP in both de novo and salvage pathways of dTTP synthesis. The sequence is that of Thymidylate kinase from Xylella fastidiosa (strain M23).